We begin with the raw amino-acid sequence, 361 residues long: Peptide chain release factor 1 (361 aa).

Glutamine 237 carries the post-translational modification N5-methylglutamine. Residues lysine 287–lysine 297 show a composition bias toward basic and acidic residues. The segment at lysine 287–asparagine 313 is disordered.

This sequence belongs to the prokaryotic/mitochondrial release factor family. Post-translationally, methylated by PrmC. Methylation increases the termination efficiency of RF1.

The protein localises to the cytoplasm. Functionally, peptide chain release factor 1 directs the termination of translation in response to the peptide chain termination codons UAG and UAA. This is Peptide chain release factor 1 from Francisella tularensis subsp. tularensis (strain FSC 198).